A 722-amino-acid chain; its full sequence is MAVDGTLVYIRVTLLLLWLGVFLSISGYCQAGPSQHFTSPEVVIPLKVISRGRSAKAPGWLSYSLRFGGQKHVVHMRVKKLLVSRHLPVFTYTDDRALLEDQLFIPDDCYYHGYVEAAPESLVVFSACFGGFRGVLKISGLTYEIEPIRHSATFEHLVYKINSNETQFPAMRCGLTEKEVARQQLEFEEAENSALEPKSAGDWWTHAWFLELVVVVNHDFFIYSQSNISKVQEDVFLVVNIVDSMYKQLGTYIILIGIEIWNQGNVFPMTSIEQVLNDFSQWKQISLSQLQHDAAHMFIKNSLISILGLAYVAGICRPPIDCGVDNFQGDTWSLFANTVAHELGHTLGMQHDEEFCFCGERGCIMNTFRVPAEKFTNCSYADFMKTTLNQGSCLHNPPRLGEIFMLKRCGNGVVEREEQCDCGSVQQCEQDACCLLNCTLRPGAACAFGLCCKDCKFMPSGELCRQEVNECDLPEWCNGTSHQCPEDRYVQDGIPCSDSAYCYQKRCNNHDQHCREIFGKDAKSASQNCYKEINSQGNRFGHCGINGTTYLKCHISDVFCGRVQCENVRDIPLLQDHFTLQHTHINGVTCWGIDYHLRMNISDIGEVKDGTVCGPGKICIHKKCVSLSVLSHVCLPETCNMKGICNNKHHCHCGYGWSPPYCQHRGYGGSIDSGPASAKRGVFLPLIVIPSLSVLTFLFTVGLLMYLRQCSGPKETKAHSSG.

A signal peptide spans 1-31 (MAVDGTLVYIRVTLLLLWLGVFLSISGYCQA). The propeptide occupies 32-196 (GPSQHFTSPE…FEEAENSALE (165 aa)). An N-linked (GlcNAc...) asparagine glycan is attached at Asn164. Residues 171 to 178 (MRCGLTEK) carry the Cysteine switch motif. Residue Cys173 coordinates Zn(2+). At 197-681 (PKSAGDWWTH…DSGPASAKRG (485 aa)) the chain is on the extracellular side. Positions 208 to 398 (WFLELVVVVN…NQGSCLHNPP (191 aa)) constitute a Peptidase M12B domain. An N-linked (GlcNAc...) asparagine glycan is attached at Asn227. 3 disulfide bridges follow: Cys316–Cys393, Cys356–Cys378, and Cys358–Cys363. His341 contributes to the Zn(2+) binding site. Residue Glu342 is part of the active site. Positions 345 and 351 each coordinate Zn(2+). Residues Asn377, Asn437, Asn478, Asn546, and Asn600 are each glycosylated (N-linked (GlcNAc...) asparagine). Positions 406–492 (LKRCGNGVVE…QCPEDRYVQD (87 aa)) constitute a Disintegrin domain. Cys464 and Cys484 are joined by a disulfide. Disulfide bonds link Cys634–Cys645, Cys639–Cys651, and Cys653–Cys662. Positions 634 to 663 (CLPETCNMKGICNNKHHCHCGYGWSPPYCQ) constitute an EGF-like domain. A helical transmembrane segment spans residues 682–702 (VFLPLIVIPSLSVLTFLFTVG). The Cytoplasmic segment spans residues 703 to 722 (LLMYLRQCSGPKETKAHSSG).

Zn(2+) is required as a cofactor. Has no obvious cleavage site for furin endopeptidase, suggesting that the proteolytic processing is regulated.

Its subcellular location is the membrane. May be involved in sperm maturation and/or fertilization. May also be involved in epithelia functions associated with establishing and maintaining gradients of ions or nutrients. This Homo sapiens (Human) protein is Disintegrin and metalloproteinase domain-containing protein 21 (ADAM21).